Reading from the N-terminus, the 154-residue chain is S-protein homolog 12 (154 aa).

A signal peptide spans 1–30 (MGTNKIPKTLNGNLVLILIITIMMVTHSHG).

It belongs to the plant self-incompatibility (S1) protein family.

It is found in the secreted. In Arabidopsis thaliana (Mouse-ear cress), this protein is S-protein homolog 12.